The chain runs to 510 residues: Serine carboxypeptidase-like 48 (510 aa).

The signal sequence occupies residues 1–25 (MDSKTTFLTFLLCIFIFSHFSPSTS). 3 disulfides stabilise this stretch: cysteine 141-cysteine 383, cysteine 309-cysteine 326, and cysteine 349-cysteine 354. N-linked (GlcNAc...) asparagine glycosylation is found at asparagine 158 and asparagine 159. Serine 231 is a catalytic residue. Active-site residues include aspartate 421 and histidine 478.

Belongs to the peptidase S10 family. In terms of tissue distribution, ubiquitous.

The protein localises to the secreted. Functionally, probable carboxypeptidase. This chain is Serine carboxypeptidase-like 48 (SCPL48), found in Arabidopsis thaliana (Mouse-ear cress).